The following is a 353-amino-acid chain: UPF0283 membrane protein YcjF (353 aa).

Residues 1–69 (MTEPLKPRID…LRPKRSLWRK (69 aa)) are Periplasmic-facing. The helical transmembrane segment at 70 to 90 (MVMGGLALFGASVVGQGVQWT) threads the bilayer. Topologically, residues 91–99 (MNAWQTQDW) are cytoplasmic. The chain crosses the membrane as a helical span at residues 100 to 120 (VALGGCAAGALIIGAGVGSVV). The Periplasmic portion of the chain corresponds to 121–212 (TEWRRLWRLR…ARREISRSAA (92 aa)). Residues 213–233 (ESTLMIAVSPLALVDMAFIAW) form a helical membrane-spanning segment. The Cytoplasmic portion of the chain corresponds to 234–353 (RNLRLINRIA…LQKGKTPSEK (120 aa)).

Belongs to the UPF0283 family.

The protein resides in the cell inner membrane. In Escherichia coli O157:H7, this protein is UPF0283 membrane protein YcjF (ycjF).